Consider the following 166-residue polypeptide: Transcriptional repressor NrdR (166 aa).

A zinc finger spans residues 3 to 34 (CPFCGFSDSRVLDSRPTVEGNSIRRRRECCGC). In terms of domain architecture, ATP-cone spans 49-139 (LIVVKKDGRR…VYREFRDAES (91 aa)).

Belongs to the NrdR family. Requires Zn(2+) as cofactor.

Its function is as follows. Negatively regulates transcription of bacterial ribonucleotide reductase nrd genes and operons by binding to NrdR-boxes. In Pelotomaculum thermopropionicum (strain DSM 13744 / JCM 10971 / SI), this protein is Transcriptional repressor NrdR.